The sequence spans 148 residues: MSGFDLSEVAGPVAEVIDDKNEEVEFVVFGVQTQPNKLVVDAKGKGGLEEVKAALKEDALQFAYYRTISGDEESKRVKFVFISWAGEGIKKPKLRAVMSILKGDVKNVINNFHIELHATSLDDLVEDEIAAKIKKAGGADYSFNTTSN.

In terms of domain architecture, ADF-H spans 1–134 (MSGFDLSEVA…VEDEIAAKIK (134 aa)). An F-loop; important for stable binding to G-actin and F-actin motif is present at residues 71-76 (DEESKR). Position 147 is a phosphoserine (Ser-147).

The protein belongs to the actin-binding proteins ADF family. Coactosin subfamily. As to quaternary structure, interacts with 14-3-3 protein 3. Post-translationally, phosphorylation at Ser-147 appears not to affect its binding to actin; however, it may regulate phagocytosis and motility.

The protein localises to the cytoplasm. It localises to the cell projection. The protein resides in the phagocytic cup. It is found in the pseudopodium. Its subcellular location is the cell membrane. The protein localises to the cytoskeleton. Functionally, actin-binding protein which is involved in F-actin stabilization. May play a role during phagocytosis and pseudopod formation by contributing to the maintenance of F-actin. The polypeptide is Coactosin (Entamoeba histolytica (strain ATCC 30459 / HM-1:IMSS / ABRM)).